A 53-amino-acid chain; its full sequence is uncharacterized protein (53 aa).

Residues 4–24 (FILLIVGFIYGAGGVLLYSVY) form a helical membrane-spanning segment.

It localises to the host membrane. This is an uncharacterized protein from Acidianus bottle-shaped virus (isolate Italy/Pozzuoli) (ABV).